Here is a 443-residue protein sequence, read N- to C-terminus: Chromosome partition protein MukF (443 aa).

Residues 209 to 237 are leucine-zipper; sequence LDETSGNLRELQDTLNAAGDKLQAQLLRI.

It belongs to the MukF family. As to quaternary structure, interacts, and probably forms a ternary complex, with MukE and MukB via its C-terminal region. The complex formation is stimulated by calcium or magnesium. It is required for an interaction between MukE and MukB.

The protein localises to the cytoplasm. The protein resides in the nucleoid. Involved in chromosome condensation, segregation and cell cycle progression. May participate in facilitating chromosome segregation by condensation DNA from both sides of a centrally located replisome during cell division. Not required for mini-F plasmid partitioning. Probably acts via its interaction with MukB and MukE. Overexpression results in anucleate cells. It has a calcium binding activity. The polypeptide is Chromosome partition protein MukF (Actinobacillus pleuropneumoniae serotype 7 (strain AP76)).